The following is a 54-amino-acid chain: Sperm protamine P3 (54 aa).

A disordered region spans residues 1-54; it reads RRRRRRGKGKGGKKKKGKKRRRRGRKGKGKGKKKGKRKGKRGGKRRRRRRKGKK.

In terms of tissue distribution, gonads.

It is found in the nucleus. The protein resides in the chromosome. Its function is as follows. Protamines substitute for histones in the chromatin of sperm during the haploid phase of spermatogenesis. They compact sperm DNA into a highly condensed, stable and inactive complex. The protein is Sperm protamine P3 of Bolinus brandaris (Purple dye murex).